Reading from the N-terminus, the 133-residue chain is Protein NrdI (133 aa).

It belongs to the NrdI family.

Probably involved in ribonucleotide reductase function. This Escherichia coli O17:K52:H18 (strain UMN026 / ExPEC) protein is Protein NrdI.